The primary structure comprises 235 residues: Orotidine 5'-phosphate decarboxylase (235 aa).

Substrate is bound by residues Asp-10, Lys-33, 60–69, Thr-123, Arg-185, Gln-194, Gly-214, and Arg-215; that span reads DLKMSDIPNT. The active-site Proton donor is Lys-62.

The protein belongs to the OMP decarboxylase family. Type 1 subfamily. Homodimer.

It catalyses the reaction orotidine 5'-phosphate + H(+) = UMP + CO2. Its pathway is pyrimidine metabolism; UMP biosynthesis via de novo pathway; UMP from orotate: step 2/2. Catalyzes the decarboxylation of orotidine 5'-monophosphate (OMP) to uridine 5'-monophosphate (UMP). In Lactobacillus gasseri (strain ATCC 33323 / DSM 20243 / BCRC 14619 / CIP 102991 / JCM 1131 / KCTC 3163 / NCIMB 11718 / NCTC 13722 / AM63), this protein is Orotidine 5'-phosphate decarboxylase.